A 682-amino-acid chain; its full sequence is Connectin (682 aa).

A signal peptide spans 1 to 24 (MATLADSAICFLLLSLLLIGACLV). Residues 29-54 (GRAKDDRRTRGRGSSSGVLSSSSSSS) are disordered. The segment covering 40–54 (RGSSSGVLSSSSSSS) has biased composition (low complexity). 11 LRR repeats span residues 149-172 (LREL…IIEP), 173-196 (LKNL…AFAN), 199-220 (FLER…AFAN), 223-244 (RLRE…AFRN), 247-268 (LCER…LFAD), 271-292 (RLTF…IFRG), 295-316 (NLNV…VFAE), 319-342 (SLSE…DGLN), 343-364 (TLKT…LLRG), 367-388 (ALLS…TFQP), and 389-404 (IMDN…LVSD). The LRRCT domain maps to 405 to 462 (NKFICDCRLQWIFELKNRTRHLQLRDSLEDLHCTLQEPKLSHFVDPVPPTILDVLNIG). Positions 503–536 (RQALRGQRQFASSAENVVESKMRRRRKRQEEVKE) are disordered. Alanine 658 is lipidated: GPI-anchor amidated alanine. Residues 659-682 (GANSLAQGMTIIVSLVALMMISRG) constitute a propeptide, removed in mature form.

In terms of tissue distribution, predominantly expressed in abdominal and thoracic segment muscle and motorneuron cells.

Its subcellular location is the cell membrane. In terms of biological role, cell adhesion protein involved in target recognition during neuromuscular development. Mediates homophilic cellular adhesion. The polypeptide is Connectin (Con) (Drosophila melanogaster (Fruit fly)).